The chain runs to 210 residues: MGQVFLLMPVLLVSCFLSQGAAIENQRLFNIAVSRVQHLHLLAQKMFNDFDGTLLPDERRQLNKIFLLDFCNSDSIVSPVDKHETQKSSVLKLLHISFRLIESWEYPSQTLIISNSLMVRNANQISEKLSDLKVGINLLITGSQDGVLSLDDNDSQQLPPYGNYYQNLGGDGNVRRNYELLACFKKDMHKVETYLTVAKCRKSLEANCTL.

An N-terminal signal peptide occupies residues 1–22 (MGQVFLLMPVLLVSCFLSQGAA). Zn(2+) is bound at residue His-38. An intrachain disulfide couples Cys-71 to Cys-183. Glu-192 provides a ligand contact to Zn(2+). Cys-200 and Cys-208 are disulfide-bonded.

Belongs to the somatotropin/prolactin family.

The protein localises to the secreted. Growth hormone plays an important role in growth control and is involved in the regulation of several anabolic processes. Implicated as an osmoregulatory substance important for seawater adaptation. The polypeptide is Somatotropin (gh) (Oncorhynchus keta (Chum salmon)).